Consider the following 414-residue polypeptide: ALEYQYVMKNPKQLSFEKFSRRLSAKAFSVKKLLTNDDLSNDIHRGYLLLQGKSLDGLLETMIQEVKEIFESRLLKLTDWNTARVFDFCSSLVFEITFTTIYGKILAANKKQIISELRDDFLKFDDHFPYLVSDIPIQLLRNAEFMQKKIIKCLTPEKVAQMQRRSEIVQERQEMLKKYYGHEEFEIGAHHLGLLWASLANTIPAMFWAMYYLLQHPEAMEVLRDEIDSFLQSTGQKKGPGISVHFTREQLDSLVCLESAILEVLRLCSYSSIIREVQEDMDFSSESRSYRLRKGDFVAVFPPMIHNDPEVFDAPKDFRFDRFVEDGKKKTTFFKGGKKLKSYIIPFGLGTSKCPGRYFAINEMKLLVIILLTYFDLEVIDTKPIGLNHSRMFLGIQHPDSDISFRYKAKSWRS.

Cys354 contributes to the heme binding site.

This sequence belongs to the cytochrome P450 family. Requires heme as cofactor. As to expression, highly expressed in brain; also expressed in liver and kidney.

It localises to the endoplasmic reticulum membrane. Its subcellular location is the microsome membrane. The enzyme catalyses 25-hydroxycholesterol + reduced [NADPH--hemoprotein reductase] + O2 = 7alpha,25-dihydroxycholesterol + oxidized [NADPH--hemoprotein reductase] + H2O + H(+). The catalysed reaction is (25R)-cholest-5-ene-3beta,26-diol + reduced [NADPH--hemoprotein reductase] + O2 = (25R)-cholest-5-en-3beta,7alpha,26-triol + oxidized [NADPH--hemoprotein reductase] + H2O + H(+). It functions in the pathway lipid metabolism; bile acid biosynthesis. Oxysterol 7alpha-hydroxylase that mediates formation of 7-alpha,25-dihydroxycholesterol (7-alpha,25-OHC) from 25-hydroxycholesterol. Plays a key role in cell positioning and movement in lymphoid tissues: 7-alpha,25-dihydroxycholesterol (7-alpha,25-OHC) acts as a ligand for the G protein-coupled receptor GPR183/EBI2, a chemotactic receptor for a number of lymphoid cells. The sequence is that of 25-hydroxycholesterol 7-alpha-hydroxylase (Cyp7b1) from Rattus norvegicus (Rat).